A 241-amino-acid polypeptide reads, in one-letter code: ATP synthase subunit 4, mitochondrial (241 aa).

The N-terminal 35 residues, 1-35 (MASRLARTAVGAARLRPSVVPRVLPALSTVASPRY), are a transit peptide targeting the mitochondrion.

It belongs to the eukaryotic ATPase B chain family. As to quaternary structure, F-type ATPases have 2 components, CF(1) - the catalytic core - and CF(0) - the membrane proton channel. In yeast, the dimeric form of ATP synthase consists of 17 polypeptides: alpha, beta, gamma, delta, epsilon, 4 (B), 5 (OSCP), 6 (A), 8, 9 (C), d, E (Tim11), f, g, h, i/j and k.

The protein localises to the mitochondrion. The protein resides in the mitochondrion inner membrane. Mitochondrial membrane ATP synthase (F(1)F(0) ATP synthase or Complex V) produces ATP from ADP in the presence of a proton gradient across the membrane which is generated by electron transport complexes of the respiratory chain. F-type ATPases consist of two structural domains, F(1) - containing the extramembraneous catalytic core, and F(0) - containing the membrane proton channel, linked together by a central stalk and a peripheral stalk. During catalysis, ATP synthesis in the catalytic domain of F(1) is coupled via a rotary mechanism of the central stalk subunits to proton translocation. Part of the complex F(0) domain and the peripheric stalk, which acts as a stator to hold the catalytic alpha(3)beta(3) subcomplex and subunit a/atp6 static relative to the rotary elements. This is ATP synthase subunit 4, mitochondrial (atp-3) from Neurospora crassa (strain ATCC 24698 / 74-OR23-1A / CBS 708.71 / DSM 1257 / FGSC 987).